A 156-amino-acid polypeptide reads, in one-letter code: Persephin (156 aa).

The signal sequence occupies residues 1-21; that stretch reads MAAGRLRILCLLLLSLHPSLG. Disulfide bonds link Cys-66–Cys-124, Cys-93–Cys-152, and Cys-97–Cys-154.

This sequence belongs to the TGF-beta family. GDNF subfamily. As to quaternary structure, homodimer; disulfide-linked. Interacts with GFRA4 coreceptor and RET: forms a 2:2:2 ternary complex composed of PSPN ligand, GFRA4 and RET receptor.

The protein resides in the secreted. Growth factor that exhibits neurotrophic activity on mesencephalic dopaminergic and motor neurons. Acts by binding to its coreceptor, GFRA4, leading to autophosphorylation and activation of the RET receptor. The sequence is that of Persephin from Mus musculus (Mouse).